Consider the following 407-residue polypeptide: Nuclear hormone receptor family member nhr-134 (407 aa).

The NR C4-type zinc-finger motif lies at 11–31 (CEICGQKTSGRHFGVMSCRSC). The segment at 47-66 (RCPNGNCKLLENGKFKCKKC) adopts an NR C4-type; degenerate zinc-finger fold. The NR LBD domain occupies 157–407 (QFHNSLERLA…FSEPDMFEST (251 aa)).

The protein belongs to the nuclear hormone receptor family.

Its subcellular location is the nucleus. In terms of biological role, orphan nuclear receptor. The polypeptide is Nuclear hormone receptor family member nhr-134 (nhr-134) (Caenorhabditis elegans).